The primary structure comprises 506 residues: Maturase K (506 aa).

It belongs to the intron maturase 2 family. MatK subfamily.

It localises to the plastid. The protein localises to the chloroplast. In terms of biological role, usually encoded in the trnK tRNA gene intron. Probably assists in splicing its own and other chloroplast group II introns. The protein is Maturase K of Medicago sativa (Alfalfa).